The sequence spans 334 residues: MALRWGICSAGKISHDFTVALRTLPAEQHQVVAVAARELAHAQEFAQKHSIPRAYGSYEELAEDPEIDVVYVGTIHPHHLRVGLLFMNAKKNVLCEKPLAMNLKEVQQMISAARRSDVFLMEAVWTRFFPASLEISRLLSQNAVGQVKLVRADFGAALLGVPRAVQKHLGGGALLDIGIYCIQFVLMVFNGEKPEQIQASGVCLDTGVDEAMVVTLKFSGHRLAVCTCTVAAELPNEALIVGTEGTIKVPAHMWCPTSLLVNGVETQFPVPDPHLPLNFINSTGMRYEAEEVRRCVLAGLKESSRMSHADSALLADIMDEARRQVGVVYSQDSQ.

Belongs to the Gfo/Idh/MocA family. Homodimer.

The catalysed reaction is (1R,2R)-1,2-dihydrobenzene-1,2-diol + NADP(+) = catechol + NADPH + H(+). It catalyses the reaction D-xylose + NADP(+) = D-xylono-1,5-lactone + NADPH + H(+). This Danio rerio (Zebrafish) protein is Trans-1,2-dihydrobenzene-1,2-diol dehydrogenase (dhdh).